A 532-amino-acid polypeptide reads, in one-letter code: Intercellular adhesion molecule 1 (532 aa).

The signal sequence occupies residues 1 to 27 (MAPSSPRPALPALLVLLGALFPGPGNA). The Extracellular segment spans residues 28–480 (QTSVSPPKVI…TVNVLSPRYE (453 aa)). Ig-like C2-type domains lie at 41-103 (GGSV…QSTA) and 128-193 (GKDL…LDLR). Disulfide bonds link Cys-48–Cys-92, Cys-52–Cys-96, and Cys-135–Cys-186. The N-linked (GlcNAc...) asparagine glycan is linked to Asn-145. The short motif at 152–154 (RGE) is the Cell attachment site; atypical element. N-linked (GlcNAc...) asparagine glycans are attached at residues Asn-183, Asn-202, Asn-267, and Asn-296. Ig-like C2-type domains lie at 230 to 297 (DTQG…LGNQ) and 325 to 378 (GTEV…LEVA). A disulfide bond links Cys-237 and Cys-290. Cysteines 332 and 371 form a disulfide. Asn-385 and Asn-406 each carry an N-linked (GlcNAc...) asparagine glycan. Disulfide bonds link Cys-403/Cys-419, Cys-419/Cys-457, and Cys-431/Cys-457. In terms of domain architecture, Ig-like C2-type 5 spans 412-464 (NSQQTPMCQASGNPLPELKCLKDGTFPLPVGESVTVTRDLEGTYLCRARSTQG). Residues 481 to 503 (IVIITVVAAAVIMGTAGLSTYLY) form a helical membrane-spanning segment. Over 504–532 (NRQRKIRKYRLQQAQKGTPMKPNTQATPP) the chain is Cytoplasmic. Residues Thr-521 and Thr-530 each carry the phosphothreonine modification.

It belongs to the immunoglobulin superfamily. ICAM family. As to quaternary structure, homodimer. Interacts with MUC1 and promotes cell aggregation in epithelial cells. Interacts with ARHGEF26/SGEF. Interacts (on T cell side) with CD81, CD247 and CD9 at immunological synapses between antigen-presenting cells and T cells. Post-translationally, monoubiquitinated, which is promoted by MARCH9 and leads to endocytosis.

Its subcellular location is the membrane. ICAM proteins are ligands for the leukocyte adhesion protein LFA-1 (integrin alpha-L/beta-2). During leukocyte trans-endothelial migration, ICAM1 engagement promotes the assembly of endothelial apical cups through ARHGEF26/SGEF and RHOG activation. The sequence is that of Intercellular adhesion molecule 1 (ICAM1) from Pan troglodytes (Chimpanzee).